The primary structure comprises 199 residues: LexA repressor (199 aa).

Positions 28–47 (IRDIAKHFKLTPRGAHIHVI) form a DNA-binding region, H-T-H motif. Catalysis depends on for autocatalytic cleavage activity residues Ser120 and Lys157.

It belongs to the peptidase S24 family. In terms of assembly, homodimer.

The catalysed reaction is Hydrolysis of Ala-|-Gly bond in repressor LexA.. Represses a number of genes involved in the response to DNA damage (SOS response), including recA and lexA. In the presence of single-stranded DNA, RecA interacts with LexA causing an autocatalytic cleavage which disrupts the DNA-binding part of LexA, leading to derepression of the SOS regulon and eventually DNA repair. The sequence is that of LexA repressor from Thermosipho melanesiensis (strain DSM 12029 / CIP 104789 / BI429).